Consider the following 99-residue polypeptide: Large ribosomal subunit protein bL27 (99 aa).

A propeptide spanning residues 1 to 9 (MLIMNLQLF) is cleaved from the precursor.

This sequence belongs to the bacterial ribosomal protein bL27 family. In terms of processing, the N-terminus is cleaved by ribosomal processing cysteine protease Prp.

This chain is Large ribosomal subunit protein bL27, found in Clostridium botulinum (strain Eklund 17B / Type B).